Here is a 332-residue protein sequence, read N- to C-terminus: 2,3-diketo-L-gulonate reductase (332 aa).

Histidine 44 serves as the catalytic Proton donor. NAD(+)-binding positions include 168–174, 224–225, and 304–306; these read ITMVDMS, WK, and GHE.

It belongs to the LDH2/MDH2 oxidoreductase family. DlgD subfamily. In terms of assembly, homodimer.

It is found in the cytoplasm. It catalyses the reaction 3-dehydro-L-gulonate + NAD(+) = 2,3-dioxo-L-gulonate + NADH + H(+). The enzyme catalyses 3-dehydro-L-gulonate + NADP(+) = 2,3-dioxo-L-gulonate + NADPH + H(+). Catalyzes the reduction of 2,3-diketo-L-gulonate in the presence of NADH, to form 3-keto-L-gulonate. In Salmonella typhi, this protein is 2,3-diketo-L-gulonate reductase.